A 623-amino-acid chain; its full sequence is Myosin light chain kinase 2, skeletal/cardiac muscle (623 aa).

Disordered stretches follow at residues 1–179 (MATE…PSCP) and 204–251 (GVPV…QGDT). Residue Ala2 is modified to N-acetylalanine. Over residues 20 to 31 (APKAAAGEGPPA) the composition is skewed to low complexity. Basic and acidic residues-rich tracts occupy residues 32–43 (AEKDPGPPDPQK) and 49–89 (DPEK…EKGD). Low complexity predominate over residues 90 to 102 (GASAQPSASSQGP). Basic and acidic residues predominate over residues 150–159 (GEAKEQKKVA). A phosphoserine mark is found at Ser169, Ser175, and Ser177. A compositionally biased stretch (low complexity) spans 204–214 (GVPVTPGPTET). Over residues 215–224 (EPAKVAEGEK) the composition is skewed to basic and acidic residues. The Protein kinase domain occupies 312 to 567 (LNSKEALGGG…AAQCLAHPWL (256 aa)). ATP-binding positions include 318 to 326 (LGGGKFGAV) and Lys341. Asp433 serves as the catalytic Proton acceptor. Phosphothreonine is present on Thr472. The interval 601–613 (IAVSAANRFKKIS) is calmodulin-binding.

Belongs to the protein kinase superfamily. CAMK Ser/Thr protein kinase family. In terms of assembly, may interact with centrin.

Its subcellular location is the cytoplasm. It catalyses the reaction L-seryl-[myosin light chain] + ATP = O-phospho-L-seryl-[myosin light chain] + ADP + H(+). The catalysed reaction is L-threonyl-[myosin light chain] + ATP = O-phospho-L-threonyl-[myosin light chain] + ADP + H(+). Functionally, implicated in the level of global muscle contraction and cardiac function. Phosphorylates a specific serine in the N-terminus of a myosin light chain. The sequence is that of Myosin light chain kinase 2, skeletal/cardiac muscle (MYLK2) from Bos taurus (Bovine).